A 320-amino-acid chain; its full sequence is Endolytic peptidoglycan transglycosylase RlpA (320 aa).

It belongs to the RlpA family.

In terms of biological role, lytic transglycosylase with a strong preference for naked glycan strands that lack stem peptides. In Rickettsia prowazekii (strain Madrid E), this protein is Endolytic peptidoglycan transglycosylase RlpA.